The sequence spans 578 residues: MRVAVIGGGPGGLTTLKHLLEAHKFVGGDPVEAKLFEAEEGIGGTFLKRMYEDAELVSSKYLTAFSDFRAREDDPDYLPAARYLEYLGEYATAFDLWPYIQLSTTVTAVRRKGRSHVISYATQDGKEGSWLCDAVAVCSGLHVTPNIPSIKGIDKVPKSFHSSGFKSREQFGSDTTVVVLGTGETAMDIAHLAVTAPTKRVVICHRDGFSVVAKRTPSPVVFPSLASQLQSPNPPVPVDTYLHASHKWGNLPGNVFDSLVKQGMWLMTGTSAGYDQWVGGYPSPRWHTSNVIFTKSSKAMPYISKPYRKDTILQRLRSSIVQVPIPETHGRHIDIAPWPSHIDSEGVLHFIDNGRPEYKRMEEAEVVRPDVLVFGTGYTQRFDFLDSTYPSTSDLDVRDVWRRDEPSVGFIGFVRPGFGAIPPLAELQAQLWVLNLLAPERLQPLLPQDEPHYRLGMPSDARIKYGVSHDDYANQLAVDMNASPSFMDAVRIGSSRKEWWRLPLVWLLAAEFNTKFRLCGPWKWDGAVDVMSGELWDVVKRRGGLLKQIVLSGVPLVVFGSLHLVLWIFTSLFKPSRW.

The helical transmembrane segment at Ile-549–Phe-569 threads the bilayer.

This sequence belongs to the FMO family. FAD serves as cofactor.

The protein localises to the membrane. The protein operates within secondary metabolite biosynthesis; flavonoid biosynthesis. Its function is as follows. Monooxygenase; part of the gene cluster that mediates the biosynthesis of chlorflavonin, a fungal flavonoid with acetolactate synthase inhibitory activity. Within the pathway, cfoE is responsible for the chlorination of the flavonoid skeleton at position C3'. The pathway begins with the PKS-NRPS hybrid synthetase cfoA that uses benzoic acid or p-hydroxybenzoic acid as a starter unit with four rounds of chain elongation using malonyl-CoA to form the chalcone skeleton. Then, a new type of chalcone isomerase, cfoK, catalyzes the conversion of the chalcone into a flavanone by a histidine-mediated oxa-Michael addition mechanism. The desaturation of flavanone to flavone is catalyzed by a new type of flavone synthase, the flavin mononucleotide (FMN)-dependent oxidoreductase cfoJ. Monooxygenases cfoF, cfoG, and P450 cfoH are responsible for the hydroxylation of the flavonoid skeleton at sites C3, C8, and C2', respectively. Like cfoF, the dehydratase cfoI plays also a role in the hydroxylation of position C3. Methyltransferases cfoB, cfoC, and cfoD then catalyze the methylation of C7-OH, C8-OH, and C3-OH, respectively. Finally, the monooxygenase cfoE is responsible for the chlorination of flavonoid at position C3'. This Aspergillus candidus protein is Monooxygenase cfoE.